The primary structure comprises 255 residues: MLQISHLYADYGGKPALEDINLTLESGELLVVLGPSGCGKTTLLNLIAGFVPYQHGSIQLAGKRIEGPGAERGVVFQNEGLLPWRNVQDNVAFGLQLAGIEKMQRLEIAHQMLKKVGLEGAEKRYIWQLSDGQRQRVGIARALAANPQLLLLDEPFGALDAFTRDQMQTLLLKLWQETGKQVLLITHDIEEAVFMATELVLLSSGPGRVLERLRLNFARRFVAGESSRSIKSDPQFIAMREYVLSRVFEQREAFS.

The ABC transporter domain maps to 2–229 (LQISHLYADY…RFVAGESSRS (228 aa)). 34-41 (GPSGCGKT) lines the ATP pocket.

The protein belongs to the ABC transporter superfamily. Taurine importer (TC 3.A.1.17.1) family. In terms of assembly, the complex is composed of two ATP-binding proteins (TauB), two transmembrane proteins (TauC) and a solute-binding protein (TauA).

Its subcellular location is the cell inner membrane. It catalyses the reaction taurine(out) + ATP + H2O = taurine(in) + ADP + phosphate + H(+). Part of the ABC transporter complex TauABC involved in taurine import. Responsible for energy coupling to the transport system. The polypeptide is Taurine import ATP-binding protein TauB (Shigella flexneri).